An 859-amino-acid polypeptide reads, in one-letter code: Envelope glycoprotein gp160 (859 aa).

Residues 1–23 form the signal peptide; that stretch reads MAYFSSRLPIALLLIGISGFVCK. Residues 24 to 678 are Extracellular-facing; the sequence is QYVTVFYGIP…WFDLTSWIKY (655 aa). Residue Asn-37 is glycosylated (N-linked (GlcNAc...) asparagine; by host). A disulfide bond links Cys-44 and Cys-57. 24 N-linked (GlcNAc...) asparagine; by host glycosylation sites follow: Asn-70, Asn-112, Asn-122, Asn-142, Asn-150, Asn-165, Asn-191, Asn-206, Asn-238, Asn-241, Asn-248, Asn-272, Asn-278, Asn-289, Asn-300, Asn-310, Asn-343, Asn-367, Asn-400, Asn-410, Asn-413, Asn-450, Asn-464, and Asn-468. Disulfide bonds link Cys-101-Cys-214, Cys-108-Cys-205, Cys-113-Cys-164, Cys-227-Cys-257, and Cys-237-Cys-249. Positions 113–163 are V1; the sequence is CSKTETNPGNASSTTTTKPTTTSRGLKTINETDPCIKNDSCTGLGEEEIMQ. Positions 164–205 are V2; sequence CNFSMTGLRRDELKQYKDTWYSEDLECNNTRKYTSRCYIRTC. Residues 305–337 form a V3 region; the sequence is CKRPGNKTVVPIRTVSGLLFHSQPINKRPRQAW. Cys-305 and Cys-338 form a disulfide bridge. Intrachain disulfides connect Cys-392/Cys-449 and Cys-399/Cys-422. The segment at 399–422 is V4; the sequence is CNMTWFLNWVENKTNTTRRNYAPC. Positions 465–471 are V5; that stretch reads STTNISV. The tract at residues 514–534 is fusion peptide; sequence GVMVLGFLGFLAMAGSAMGAT. The immunosuppression stretch occupies residues 577-593; sequence LQARVTAIEKYLKDQAQ. Residues Asn-613, Asn-622, and Asn-638 are each glycosylated (N-linked (GlcNAc...) asparagine; by host). The stretch at 626 to 647 forms a coiled coil; it reads QQWEKQVHFLDANITALLEEAQ. The interval 659-680 is MPER; binding to GalCer; it reads KINSWDVFGNWFDLTSWIKYIH. A helical transmembrane segment spans residues 679–699; sequence IHLGLYIVAGLVVLRIVVYIV. Residues 700-859 are Cytoplasmic-facing; sequence QMLARLRKGY…IRQGLELTLL (160 aa). Residues 709–712 carry the YXXV motif; contains endocytosis signal motif; it reads YRPV. Positions 715–744 are disordered; it reads SPPSYTQQIPIRKDRGQPANEETEEGGGND. Cys-775 is lipidated: S-palmitoyl cysteine; by host. The short motif at 858 to 859 is the Di-leucine internalization motif element; that stretch reads LL.

The mature envelope protein (Env) consists of a homotrimer of non-covalently associated gp120-gp41 heterodimers. The resulting complex protrudes from the virus surface as a spike. There seems to be as few as 10 spikes on the average virion. Interacts with human CD4, CCR5 and CXCR4, to form a P4HB/PDI-CD4-CXCR4-gp120 complex. Gp120 also interacts with the C-type lectins CD209/DC-SIGN and CLEC4M/DC-SIGNR (collectively referred to as DC-SIGN(R)). Gp120 and gp41 interact with GalCer. In terms of assembly, the mature envelope protein (Env) consists of a homotrimer of non-covalently associated gp120-gp41 heterodimers. The resulting complex protrudes from the virus surface as a spike. There seems to be as few as 10 spikes on the average virion. In terms of processing, specific enzymatic cleavages in vivo yield mature proteins. Envelope glycoproteins are synthesized as an inactive precursor that is heavily N-glycosylated and processed likely by host cell furin in the Golgi to yield the mature SU and TM proteins. The cleavage site between SU and TM requires the minimal sequence [KR]-X-[KR]-R. Palmitoylation of the transmembrane protein and of Env polyprotein (prior to its proteolytic cleavage) is essential for their association with host cell membrane lipid rafts. Palmitoylation is therefore required for envelope trafficking to classical lipid rafts, but not for viral replication.

The protein resides in the virion membrane. It localises to the host cell membrane. The protein localises to the host endosome membrane. In terms of biological role, the surface protein gp120 (SU) attaches the virus to the host lymphoid cell by binding to the primary receptor CD4. This interaction induces a structural rearrangement creating a high affinity binding site for a chemokine coreceptor like CXCR4 and/or CCR5. This peculiar 2 stage receptor-interaction strategy allows gp120 to maintain the highly conserved coreceptor-binding site in a cryptic conformation, protected from neutralizing antibodies. Since CD4 also displays a binding site for the disulfide-isomerase P4HB/PDI, a P4HB/PDI-CD4-CXCR4-gp120 complex may form. In that complex, P4HB/PDI could reach and reduce gp120 disulfide bonds, causing major conformational changes in gp120. TXN, another PDI family member could also be involved in disulfide rearrangements in Env during fusion. These changes are transmitted to the transmembrane protein gp41 and are thought to activate its fusogenic potential by unmasking its fusion peptide. Functionally, the surface protein gp120 is a ligand for CD209/DC-SIGN and CLEC4M/DC-SIGNR, which are respectively found on dendritic cells (DCs), and on endothelial cells of liver sinusoids and lymph node sinuses. These interactions allow capture of viral particles at mucosal surfaces by these cells and subsequent transmission to permissive cells. DCs are professional antigen presenting cells, critical for host immunity by inducing specific immune responses against a broad variety of pathogens. They act as sentinels in various tissues where they take up antigen, process it, and present it to T-cells following migration to lymphoid organs. HIV subverts the migration properties of dendritic cells to gain access to CD4+ T-cells in lymph nodes. Virus transmission to permissive T-cells occurs either in trans (without DCs infection, through viral capture and transmission), or in cis (following DCs productive infection, through the usual CD4-gp120 interaction), thereby inducing a robust infection. In trans infection, bound virions remain infectious over days and it is proposed that they are not degraded, but protected in non-lysosomal acidic organelles within the DCs close to the cell membrane thus contributing to the viral infectious potential during DCs' migration from the periphery to the lymphoid tissues. On arrival at lymphoid tissues, intact virions recycle back to DCs' cell surface allowing virus transmission to CD4+ T-cells. Virion capture also seems to lead to MHC-II-restricted viral antigen presentation, and probably to the activation of HIV-specific CD4+ cells. Its function is as follows. The transmembrane protein gp41 (TM) acts as a class I viral fusion protein. Under the current model, the protein has at least 3 conformational states: pre-fusion native state, pre-hairpin intermediate state, and post-fusion hairpin state. During fusion of viral and target intracellular membranes, the coiled coil regions (heptad repeats) assume a trimer-of-hairpins structure, positioning the fusion peptide in close proximity to the C-terminal region of the ectodomain. The formation of this structure appears to drive apposition and subsequent fusion of viral and target cell membranes. Complete fusion occurs in host cell endosomes and is dynamin-dependent, however some lipid transfer might occur at the plasma membrane. The virus undergoes clathrin-dependent internalization long before endosomal fusion, thus minimizing the surface exposure of conserved viral epitopes during fusion and reducing the efficacy of inhibitors targeting these epitopes. Membranes fusion leads to delivery of the nucleocapsid into the cytoplasm. The envelope glycoprotein gp160 precursor down-modulates cell surface CD4 antigen by interacting with it in the endoplasmic reticulum and blocking its transport to the cell surface. In terms of biological role, the gp120-gp41 heterodimer seems to contribute to T-cell depletion during HIV-1 infection. The envelope glycoproteins expressed on the surface of infected cells induce apoptosis through an interaction with uninfected cells expressing the receptor (CD4) and the coreceptors CXCR4 or CCR5. This type of bystander killing may be obtained by at least three distinct mechanisms. First, the interaction between the 2 cells can induce cellular fusion followed by nuclear fusion within the syncytium. Syncytia are condemned to die from apoptosis. Second, the 2 interacting cells may not fuse entirely and simply exchange plasma membrane lipids, after a sort of hemifusion process, followed by rapid death. Third, it is possible that virus-infected cells, on the point of undergoing apoptosis, fuse with CD4-expressing cells, in which case apoptosis is rapidly transmitted from one cell to the other and thus occurs in a sort of contagious fashion. Functionally, the gp120-gp41 heterodimer allows rapid transcytosis of the virus through CD4 negative cells such as simple epithelial monolayers of the intestinal, rectal and endocervical epithelial barriers. Both gp120 and gp41 specifically recognize glycosphingolipids galactosyl-ceramide (GalCer) or 3' sulfo-galactosyl-ceramide (GalS) present in the lipid rafts structures of epithelial cells. Binding to these alternative receptors allows the rapid transcytosis of the virus through the epithelial cells. This transcytotic vesicle-mediated transport of virions from the apical side to the basolateral side of the epithelial cells does not involve infection of the cells themselves. This chain is Envelope glycoprotein gp160 (env), found in Human immunodeficiency virus type 2 subtype B (isolate D205) (HIV-2).